The sequence spans 397 residues: Putative gustatory receptor 85a (397 aa).

Topologically, residues 1-56 (MYSLIEAQLLGGKLVNRVMASLRRIIQRSLGYFCALNGILDFNTDIGTGNLRRYRV) are cytoplasmic. A helical membrane pass occupies residues 57 to 77 (LFMYRLLHNFAVISLTLKFLF). The Extracellular segment spans residues 78 to 90 (DFTDHFKYIESST). Residues 91–111 (LITVNFFTYFTLVFFALLSSM) traverse the membrane as a helical segment. Topologically, residues 112–151 (GSCYQWQNRILAVLKELKHQRDLSRHMGYRVPRSKQNSID) are cytoplasmic. Residues 152-172 (YLLFALTVLLILRLSIHLATF) traverse the membrane as a helical segment. Over 173 to 186 (TLSARMGFNHPCNC) the chain is Extracellular. The chain crosses the membrane as a helical span at residues 187 to 207 (FLPECMIFSMNYLLFAILAEI). Residues 208-268 (TRCWWSLQSG…RYVTLAYMAR (61 aa)) are Cytoplasmic-facing. A helical membrane pass occupies residues 269–289 (NLWSGIVAGYLLVRFVIGNGL). At 290 to 293 (QDVE) the chain is on the extracellular side. The chain crosses the membrane as a helical span at residues 294 to 314 (LVYLVFSFITCIQPLMLSLLV). Residues 315–375 (NSMTSTTGSL…FRINRSLAFR (61 aa)) lie on the Cytoplasmic side of the membrane. The helical transmembrane segment at 376-396 (SASLILVHVLYMVQSDYISIT) threads the bilayer. Residue Asn397 is a topological domain, extracellular.

It belongs to the insect chemoreceptor superfamily. Gustatory receptor (GR) family. Gr22e subfamily.

The protein localises to the cell membrane. Probable gustatory receptor which mediates acceptance or avoidance behavior, depending on its substrates. The sequence is that of Putative gustatory receptor 85a (Gr85a) from Drosophila melanogaster (Fruit fly).